A 500-amino-acid polypeptide reads, in one-letter code: UDP-N-acetylmuramoyl-L-alanyl-D-glutamate--2,6-diaminopimelate ligase (500 aa).

Residue Ser32 participates in UDP-N-acetyl-alpha-D-muramoyl-L-alanyl-D-glutamate binding. Residue Gly117 to Thr123 participates in ATP binding. Residues Thr159–Thr160, Ser186, Gln192, and Arg194 contribute to the UDP-N-acetyl-alpha-D-muramoyl-L-alanyl-D-glutamate site. N6-carboxylysine is present on Lys226. Meso-2,6-diaminopimelate is bound by residues Arg395, Asp419–Arg422, Gly470, and Glu474. The Meso-diaminopimelate recognition motif motif lies at Asp419–Arg422.

Belongs to the MurCDEF family. MurE subfamily. The cofactor is Mg(2+). In terms of processing, carboxylation is probably crucial for Mg(2+) binding and, consequently, for the gamma-phosphate positioning of ATP.

The protein localises to the cytoplasm. It catalyses the reaction UDP-N-acetyl-alpha-D-muramoyl-L-alanyl-D-glutamate + meso-2,6-diaminopimelate + ATP = UDP-N-acetyl-alpha-D-muramoyl-L-alanyl-gamma-D-glutamyl-meso-2,6-diaminopimelate + ADP + phosphate + H(+). It functions in the pathway cell wall biogenesis; peptidoglycan biosynthesis. Its function is as follows. Catalyzes the addition of meso-diaminopimelic acid to the nucleotide precursor UDP-N-acetylmuramoyl-L-alanyl-D-glutamate (UMAG) in the biosynthesis of bacterial cell-wall peptidoglycan. The polypeptide is UDP-N-acetylmuramoyl-L-alanyl-D-glutamate--2,6-diaminopimelate ligase (Parasynechococcus marenigrum (strain WH8102)).